Here is a 574-residue protein sequence, read N- to C-terminus: Ribonuclease Y (574 aa).

Residues 1–21 form a helical membrane-spanning segment; it reads MSLLDLVLLLLVLGLGGVLLL. In terms of domain architecture, KH spans 264 to 327; that stretch reads AVTVVPIPSD…EIARMALEEL (64 aa). Positions 390–483 constitute an HD domain; sequence VLKHSIQVAH…VAAADALSAA (94 aa).

Belongs to the RNase Y family.

Its subcellular location is the cell membrane. In terms of biological role, endoribonuclease that initiates mRNA decay. The protein is Ribonuclease Y of Thermus thermophilus (strain ATCC 27634 / DSM 579 / HB8).